The sequence spans 563 residues: Arginine--tRNA ligase (563 aa).

The short motif at 121-131 (PNIAKPFSIGH) is the 'HIGH' region element.

Belongs to the class-I aminoacyl-tRNA synthetase family. As to quaternary structure, monomer.

The protein localises to the cytoplasm. It catalyses the reaction tRNA(Arg) + L-arginine + ATP = L-arginyl-tRNA(Arg) + AMP + diphosphate. The protein is Arginine--tRNA ligase of Streptococcus pyogenes serotype M4 (strain MGAS10750).